Consider the following 295-residue polypeptide: Protoheme IX farnesyltransferase 2 (295 aa).

The next 9 helical transmembrane spans lie at 9–29 (ITKPGIIFGNVLSVAGGFFLA), 36–56 (LAIFLAAMIGTSLVVASGCVF), 85–105 (VALVYASILGVAGVALLYYVA), 108–128 (LAALFAVIGFVIYVGFYSLYL), 135–155 (GTLVGSLSGAMPPVIGYVAVS), 163–183 (LTLLVMFSLWQMPHSYAIAIF), 209–229 (ILLYILAFLVATLMLTFSGYA), 230–250 (GMSYLAVAAAMGMYWLYMAWT), and 263–283 (KLFVFSIFTITALSVMMSVDF).

Belongs to the UbiA prenyltransferase family. Protoheme IX farnesyltransferase subfamily.

The protein resides in the cell inner membrane. The enzyme catalyses heme b + (2E,6E)-farnesyl diphosphate + H2O = Fe(II)-heme o + diphosphate. The protein operates within porphyrin-containing compound metabolism; heme O biosynthesis; heme O from protoheme: step 1/1. Converts heme B (protoheme IX) to heme O by substitution of the vinyl group on carbon 2 of heme B porphyrin ring with a hydroxyethyl farnesyl side group. The polypeptide is Protoheme IX farnesyltransferase 2 (Pseudomonas fluorescens (strain ATCC BAA-477 / NRRL B-23932 / Pf-5)).